The following is a 160-amino-acid chain: Ribosomal RNA large subunit methyltransferase H (160 aa).

S-adenosyl-L-methionine contacts are provided by Leu-76 and Gly-108.

It belongs to the RNA methyltransferase RlmH family. Homodimer.

The protein localises to the cytoplasm. The catalysed reaction is pseudouridine(1915) in 23S rRNA + S-adenosyl-L-methionine = N(3)-methylpseudouridine(1915) in 23S rRNA + S-adenosyl-L-homocysteine + H(+). Functionally, specifically methylates the pseudouridine at position 1915 (m3Psi1915) in 23S rRNA. This is Ribosomal RNA large subunit methyltransferase H from Nitrobacter winogradskyi (strain ATCC 25391 / DSM 10237 / CIP 104748 / NCIMB 11846 / Nb-255).